Consider the following 564-residue polypeptide: Agglutinin (564 aa).

The first 24 residues, 1 to 24, serve as a signal peptide directing secretion; the sequence is MYAVATWLCFGSTSGWSFTLEDNN. Beta-D-galactose is bound at residue 32-34; that stretch reads IIN. The N-linked (GlcNAc...) asparagine glycan is linked to N34. Catalysis depends on residues Y104, Y147, E200, and R203. AMP-binding positions include 104 to 105 and 145 to 147; these read YV and GNY. An N-linked (GlcNAc...) asparagine glycan is attached at N259. Residues C282 and C306 are joined by a disulfide bond. The propeptide at 291 to 302 is linker peptide; the sequence is SLLIRPVVPNFN. A Ricin B-type lectin 1 domain is found at 309 to 436; sequence PEPIVRIVGR…YAVSQGWLPT (128 aa). Beta-D-galactose is bound by residues I312, 324-328, Q337, K342, and N348; that span reads DVTGE. The 1-alpha repeat unit spans residues 319 to 361; sequence NGLCVDVTGEEFFDGNPIQLWPCKSNTDWNQLWTLRKDSTIRS. C322 and C341 are joined by a disulfide. A 1-beta repeat occupies 362 to 402; the sequence is NGKCLTISKSSPRQQVVIYNCSTATVGATRWQIWDNRTIIN. Cysteines 365 and 382 form a disulfide. Residues N397 and N437 are each glycosylated (N-linked (GlcNAc...) asparagine). Residues 405 to 437 form a 1-gamma repeat; that stretch reads SGLVLAATSGNSGTKLTVQTNIYAVSQGWLPTN. N437 contributes to the beta-D-galactose binding site. The region spanning 439 to 563 is the Ricin B-type lectin 2 domain; that stretch reads TQPFVTTIVG…GNLNQIWLPL (125 aa). Residues 450-485 form a 2-alpha repeat; sequence YGMCLQANSGKVWLEDCTSEKAEQQWALYADGSIRP. 2 cysteine pairs are disulfide-bonded: C453-C466 and C492-C509. One copy of the 2-beta repeat lies at 489 to 528; the sequence is RDNCLTTDANIKGTVVKILSCGPASSGQRWMFKNDGTILN. The 2-gamma repeat unit spans residues 531 to 558; sequence NGLVLDVRRSDPSLKQIIVHPFHGNLNQ.

This sequence in the N-terminal section; belongs to the ribosome-inactivating protein family. Type 2 RIP subfamily.

It catalyses the reaction Endohydrolysis of the N-glycosidic bond at one specific adenosine on the 28S rRNA.. This Ricinus communis (Castor bean) protein is Agglutinin.